The sequence spans 41 residues: Large ribosomal subunit protein bL36 (41 aa).

This sequence belongs to the bacterial ribosomal protein bL36 family.

The protein is Large ribosomal subunit protein bL36 of Methylocella silvestris (strain DSM 15510 / CIP 108128 / LMG 27833 / NCIMB 13906 / BL2).